The sequence spans 840 residues: Heat shock 70 kDa protein 4 (840 aa).

N6-acetyllysine is present on Lys53. Ser76 bears the Phosphoserine mark. Phosphotyrosine occurs at positions 89 and 336. A phosphoserine mark is found at Ser393 and Ser415. Residue Lys430 is modified to N6-acetyllysine. The interval 506–575 (NEEPMETDQN…QAKKAKVKTS (70 aa)) is disordered. The segment covering 514-533 (QNAKEEEKMQVDQEEPHAEE) has biased composition (basic and acidic residues). Thr538 carries the phosphothreonine modification. A phosphoserine mark is found at Ser546 and Ser647. A Phosphotyrosine modification is found at Tyr660. The residue at position 679 (Lys679) is an N6-acetyllysine. At Ser756 the chain carries Phosphoserine. Lys773 carries the post-translational modification N6-methyllysine. The tract at residues 782 to 840 (IISKPKPKVEPPKEEQKNAEQNGPVDGQGDSPGPQAAEQGTDTAVPSDSDKKLPEMDID) is disordered. Composition is skewed to basic and acidic residues over residues 788-799 (PKVEPPKEEQKN) and 829-840 (DSDKKLPEMDID).

The protein belongs to the heat shock protein 70 family. In terms of assembly, interacts with TJP1/ZO-1.

It is found in the cytoplasm. The protein is Heat shock 70 kDa protein 4 (HSPA4) of Canis lupus familiaris (Dog).